The primary structure comprises 642 residues: Phosphomethylpyrimidine synthase (642 aa).

Substrate is bound by residues Asn-235, Met-264, Tyr-293, His-329, 349–351, 390–393, and Glu-429; these read SRG and DGLR. Position 433 (His-433) interacts with Zn(2+). Residue Tyr-456 coordinates substrate. His-497 contributes to the Zn(2+) binding site. Residues Cys-577, Cys-580, and Cys-585 each contribute to the [4Fe-4S] cluster site.

Belongs to the ThiC family. Homodimer. [4Fe-4S] cluster is required as a cofactor.

The enzyme catalyses 5-amino-1-(5-phospho-beta-D-ribosyl)imidazole + S-adenosyl-L-methionine = 4-amino-2-methyl-5-(phosphooxymethyl)pyrimidine + CO + 5'-deoxyadenosine + formate + L-methionine + 3 H(+). The protein operates within cofactor biosynthesis; thiamine diphosphate biosynthesis. In terms of biological role, catalyzes the synthesis of the hydroxymethylpyrimidine phosphate (HMP-P) moiety of thiamine from aminoimidazole ribotide (AIR) in a radical S-adenosyl-L-methionine (SAM)-dependent reaction. The protein is Phosphomethylpyrimidine synthase of Alteromonas mediterranea (strain DSM 17117 / CIP 110805 / LMG 28347 / Deep ecotype).